Reading from the N-terminus, the 300-residue chain is Acetylglutamate kinase (300 aa).

Substrate contacts are provided by residues 68–69, R90, and N195; that span reads GG.

This sequence belongs to the acetylglutamate kinase family. ArgB subfamily.

It localises to the cytoplasm. It catalyses the reaction N-acetyl-L-glutamate + ATP = N-acetyl-L-glutamyl 5-phosphate + ADP. The protein operates within amino-acid biosynthesis; L-arginine biosynthesis; N(2)-acetyl-L-ornithine from L-glutamate: step 2/4. Catalyzes the ATP-dependent phosphorylation of N-acetyl-L-glutamate. The protein is Acetylglutamate kinase of Stutzerimonas stutzeri (strain A1501) (Pseudomonas stutzeri).